Reading from the N-terminus, the 787-residue chain is Protocadherin beta-15 (787 aa).

The N-terminal stretch at 1-26 is a signal peptide; sequence MEPAGERFPEQRQVLILLLLLEVTLA. The Extracellular segment spans residues 27–690; that stretch reads GWEPRRYSVM…AQADSLTVYL (664 aa). Cadherin domains are found at residues 35 to 133, 138 to 242, 247 to 347, 352 to 451, and 456 to 561; these read VMEE…SPEF, MTLK…APEF, YEVQ…FPEL, LTSP…APAF, and YTLF…SPFV. A glycan (N-linked (GlcNAc...) asparagine) is linked at asparagine 418. The N-linked (GlcNAc...) asparagine glycan is linked to asparagine 567. Residues 568–671 enclose the Cadherin 6 domain; the sequence is GSAPCTELVP…LVDGFSQPYL (104 aa). Residues 691–711 traverse the membrane as a helical segment; the sequence is VVALASVSSLFLFSVFLFVAV. The Cytoplasmic segment spans residues 712 to 787; that stretch reads RLCRRSRAAS…DSRRKSEFLE (76 aa).

It localises to the cell membrane. Functionally, potential calcium-dependent cell-adhesion protein. May be involved in the establishment and maintenance of specific neuronal connections in the brain. The chain is Protocadherin beta-15 (PCDHB15) from Homo sapiens (Human).